A 214-amino-acid polypeptide reads, in one-letter code: RNA-free ribonuclease P (214 aa).

It belongs to the HARP family.

It catalyses the reaction Endonucleolytic cleavage of RNA, removing 5'-extranucleotides from tRNA precursor.. Its function is as follows. RNA-free RNase P that catalyzes the removal of the 5'-leader sequence from pre-tRNA to produce the mature 5'-terminus. This Aeropyrum pernix (strain ATCC 700893 / DSM 11879 / JCM 9820 / NBRC 100138 / K1) protein is RNA-free ribonuclease P.